A 676-amino-acid polypeptide reads, in one-letter code: ATP-dependent zinc metalloprotease FtsH (676 aa).

Residues 1 to 12 lie on the Cytoplasmic side of the membrane; it reads MSFFDKIFKKFH. The helical transmembrane segment at 13–33 threads the bilayer; that stretch reads MGVLYFAVILIGATFIYCYFT. The Extracellular portion of the chain corresponds to 34–115; the sequence is KHEKKDNNTF…DPRPWNGYEH (82 aa). The chain crosses the membrane as a helical span at residues 116–136; sequence VFWVFRQCLTMLFFYCFFLFF. Over 137-676 the chain is Cytoplasmic; the sequence is ADTIKQMGQE…EVLSTDSEQT (540 aa). 212-219 provides a ligand contact to ATP; that stretch reads GPPGTGKT. His-433 is a binding site for Zn(2+). Glu-434 is an active-site residue. His-437 and Asp-509 together coordinate Zn(2+). Residues 610–676 form a disordered region; that stretch reads EKEETNAPTQ…EVLSTDSEQT (67 aa). A compositionally biased stretch (polar residues) spans 615–636; the sequence is NAPTQTTSQMSSNNETTNTDKT. Low complexity predominate over residues 650-667; sequence NQESNESNPNNNEKASPE.

It in the central section; belongs to the AAA ATPase family. In the C-terminal section; belongs to the peptidase M41 family. Homohexamer. Zn(2+) is required as a cofactor.

It is found in the cell membrane. Its function is as follows. Acts as a processive, ATP-dependent zinc metallopeptidase for both cytoplasmic and membrane proteins. Plays a role in the quality control of integral membrane proteins. The chain is ATP-dependent zinc metalloprotease FtsH from Aster yellows witches'-broom phytoplasma (strain AYWB).